The primary structure comprises 351 residues: S-adenosylmethionine:tRNA ribosyltransferase-isomerase (351 aa).

This sequence belongs to the QueA family. Monomer.

The protein resides in the cytoplasm. It catalyses the reaction 7-aminomethyl-7-carbaguanosine(34) in tRNA + S-adenosyl-L-methionine = epoxyqueuosine(34) in tRNA + adenine + L-methionine + 2 H(+). It participates in tRNA modification; tRNA-queuosine biosynthesis. In terms of biological role, transfers and isomerizes the ribose moiety from AdoMet to the 7-aminomethyl group of 7-deazaguanine (preQ1-tRNA) to give epoxyqueuosine (oQ-tRNA). In Acinetobacter baumannii (strain SDF), this protein is S-adenosylmethionine:tRNA ribosyltransferase-isomerase.